The sequence spans 66 residues: Large ribosomal subunit protein bL33 (66 aa).

Belongs to the bacterial ribosomal protein bL33 family.

The protein is Large ribosomal subunit protein bL33 of Wolbachia sp. subsp. Brugia malayi (strain TRS).